A 360-amino-acid chain; its full sequence is Molybdenum import ATP-binding protein ModC (360 aa).

In terms of domain architecture, ABC transporter spans Val-5 to Asp-234. ATP is bound at residue Gly-32–Thr-39. The 66-residue stretch at His-295 to Ala-360 folds into the Mop domain.

The protein belongs to the ABC transporter superfamily. Molybdate importer (TC 3.A.1.8) family. In terms of assembly, the complex is composed of two ATP-binding proteins (ModC), two transmembrane proteins (ModB) and a solute-binding protein (ModA).

Its subcellular location is the cell inner membrane. The enzyme catalyses molybdate(out) + ATP + H2O = molybdate(in) + ADP + phosphate + H(+). Functionally, part of the ABC transporter complex ModABC involved in molybdenum import. Responsible for energy coupling to the transport system. This Pseudomonas fluorescens (strain ATCC BAA-477 / NRRL B-23932 / Pf-5) protein is Molybdenum import ATP-binding protein ModC.